A 336-amino-acid polypeptide reads, in one-letter code: Dihydroorotate dehydrogenase (quinone) (336 aa).

Residues 62 to 66 and Thr86 contribute to the FMN site; that span reads AGLDK. A substrate-binding site is contributed by Lys66. 111–115 provides a ligand contact to substrate; the sequence is NRMGF. FMN-binding residues include Asn139 and Asn172. Residue Asn172 coordinates substrate. Ser175 serves as the catalytic Nucleophile. Residue Asn177 participates in substrate binding. FMN contacts are provided by Lys217 and Thr245. 246 to 247 is a substrate binding site; it reads NT. FMN is bound by residues Gly268, Gly297, and 318–319; that span reads YS.

It belongs to the dihydroorotate dehydrogenase family. Type 2 subfamily. In terms of assembly, monomer. Requires FMN as cofactor.

The protein localises to the cell membrane. The enzyme catalyses (S)-dihydroorotate + a quinone = orotate + a quinol. It participates in pyrimidine metabolism; UMP biosynthesis via de novo pathway; orotate from (S)-dihydroorotate (quinone route): step 1/1. Catalyzes the conversion of dihydroorotate to orotate with quinone as electron acceptor. This Klebsiella pneumoniae subsp. pneumoniae (strain ATCC 700721 / MGH 78578) protein is Dihydroorotate dehydrogenase (quinone).